Here is a 177-residue protein sequence, read N- to C-terminus: NADH-quinone oxidoreductase subunit B (177 aa).

[4Fe-4S] cluster contacts are provided by Cys-53, Cys-54, Cys-118, and Cys-148.

It belongs to the complex I 20 kDa subunit family. NDH-1 is composed of 14 different subunits. Subunits NuoB, C, D, E, F, and G constitute the peripheral sector of the complex. Requires [4Fe-4S] cluster as cofactor.

It is found in the cell membrane. It carries out the reaction a quinone + NADH + 5 H(+)(in) = a quinol + NAD(+) + 4 H(+)(out). NDH-1 shuttles electrons from NADH, via FMN and iron-sulfur (Fe-S) centers, to quinones in the respiratory chain. The immediate electron acceptor for the enzyme in this species is believed to be a menaquinone. Couples the redox reaction to proton translocation (for every two electrons transferred, four hydrogen ions are translocated across the cytoplasmic membrane), and thus conserves the redox energy in a proton gradient. The protein is NADH-quinone oxidoreductase subunit B of Anoxybacillus flavithermus (strain DSM 21510 / WK1).